We begin with the raw amino-acid sequence, 298 residues long: Tyrosine recombinase XerC (298 aa).

In terms of domain architecture, Core-binding (CB) spans 1-84 (MNHIQEAFLN…TLRTFYEYWM (84 aa)). The 182-residue stretch at 105-286 (YLPQFFYEEE…SNQQLRKVYL (182 aa)) folds into the Tyr recombinase domain. Active-site residues include Arg145, Lys169, His238, Arg241, and His264. Tyr273 acts as the O-(3'-phospho-DNA)-tyrosine intermediate in catalysis.

The protein belongs to the 'phage' integrase family. XerC subfamily. In terms of assembly, forms a cyclic heterotetrameric complex composed of two molecules of XerC and two molecules of XerD.

It is found in the cytoplasm. In terms of biological role, site-specific tyrosine recombinase, which acts by catalyzing the cutting and rejoining of the recombining DNA molecules. The XerC-XerD complex is essential to convert dimers of the bacterial chromosome into monomers to permit their segregation at cell division. It also contributes to the segregational stability of plasmids. In Staphylococcus aureus (strain JH1), this protein is Tyrosine recombinase XerC.